Here is a 566-residue protein sequence, read N- to C-terminus: Mediator of RNA polymerase II transcription subunit 1 (566 aa).

Phosphoserine is present on Ser-155. The disordered stretch occupies residues 361–425 (TPSSNSNSSE…TNKSKRPSIT (65 aa)). Positions 410-421 (RRRRSSTNKSKR) are enriched in basic residues. The residue at position 423 (Ser-423) is a Phosphoserine.

The protein belongs to the Mediator complex subunit 1 family. Component of the Mediator complex, which is composed of at least 21 subunits that form three structurally distinct submodules. The Mediator head module contains MED6, MED8, MED11, SRB4/MED17, SRB5/MED18, ROX3/MED19, SRB2/MED20 and SRB6/MED22, the middle module contains MED1, MED4, NUT1/MED5, MED7, CSE2/MED9, NUT2/MED10, SRB7/MED21 and SOH1/MED31, and the tail module contains MED2, PGD1/MED3, RGR1/MED14, GAL11/MED15 and SIN4/MED16. The head and the middle modules interact directly with RNA polymerase II, whereas the elongated tail module interacts with gene-specific regulatory proteins. MED1 interacts directly with MED4 and MED7.

It is found in the nucleus. In terms of biological role, component of the Mediator complex, a coactivator involved in the regulated transcription of nearly all RNA polymerase II-dependent genes. Mediator functions as a bridge to convey information from gene-specific regulatory proteins to the basal RNA polymerase II transcription machinery. The Mediator complex, having a compact conformation in its free form, is recruited to promoters by direct interactions with regulatory proteins and serves for the assembly of a functional preinitiation complex with RNA polymerase II and the general transcription factors. The Mediator complex unfolds to an extended conformation and partially surrounds RNA polymerase II, specifically interacting with the unphosphorylated form of the C-terminal domain (CTD) of RNA polymerase II. The Mediator complex dissociates from the RNA polymerase II holoenzyme and stays at the promoter when transcriptional elongation begins. This chain is Mediator of RNA polymerase II transcription subunit 1 (MED1), found in Saccharomyces cerevisiae (strain ATCC 204508 / S288c) (Baker's yeast).